The chain runs to 239 residues: Carboxy-S-adenosyl-L-methionine synthase (239 aa).

S-adenosyl-L-methionine is bound by residues Tyr-36, 61-63 (GCS), 111-112 (DI), Asn-126, and Arg-193.

It belongs to the class I-like SAM-binding methyltransferase superfamily. Cx-SAM synthase family. As to quaternary structure, homodimer.

It carries out the reaction prephenate + S-adenosyl-L-methionine = carboxy-S-adenosyl-L-methionine + 3-phenylpyruvate + H2O. Functionally, catalyzes the conversion of S-adenosyl-L-methionine (SAM) to carboxy-S-adenosyl-L-methionine (Cx-SAM). This Nitratiruptor sp. (strain SB155-2) protein is Carboxy-S-adenosyl-L-methionine synthase.